Reading from the N-terminus, the 287-residue chain is MWKEKVSVTPPYHFDRVLDRLSLDPLNAVDREAREVRVPIRNQAGDVCIVKVQALGHAGEPEFLVSGETDQGEMMKEIKRIFQWENHLQHVLDHFSKTSLSAIFEEHAGTPLVLDYSVYNCMMKCIIHQQLNLSFAYTLTERFVHAFGEQKDGVWCYPKPETIAELDYQDLRDLQFSMRKAEYTIDTSRMIAEGTLSLSELPHMADEDIMKKLIKIRGIGPWTVQNVLMFGLGRPNLFPLADIGLQNAIKRHFQLDDKPAKDVMLAMSKEWEPYLSYASLYLWRSIE.

Asp242 serves as the catalytic Proton acceptor.

This sequence belongs to the alkylbase DNA glycosidase AlkA family.

It catalyses the reaction Hydrolysis of alkylated DNA, releasing 3-methyladenine, 3-methylguanine, 7-methylguanine and 7-methyladenine.. In terms of biological role, hydrolysis of the deoxyribose N-glycosidic bond to excise 3-methyladenine, 3-methylguanine, 7-methylguanine, O2-methylthymine, and O2-methylcytosine from the damaged DNA polymer formed by alkylation lesions. The polypeptide is Putative DNA-3-methyladenine glycosylase YfjP (yfjP) (Bacillus subtilis (strain 168)).